A 705-amino-acid polypeptide reads, in one-letter code: Elongation factor G (705 aa).

The region spanning E8–N290 is the tr-type G domain. Residues A17–T24, D88–H92, and N142–D145 each bind GTP.

This sequence belongs to the TRAFAC class translation factor GTPase superfamily. Classic translation factor GTPase family. EF-G/EF-2 subfamily.

Its subcellular location is the cytoplasm. Its function is as follows. Catalyzes the GTP-dependent ribosomal translocation step during translation elongation. During this step, the ribosome changes from the pre-translocational (PRE) to the post-translocational (POST) state as the newly formed A-site-bound peptidyl-tRNA and P-site-bound deacylated tRNA move to the P and E sites, respectively. Catalyzes the coordinated movement of the two tRNA molecules, the mRNA and conformational changes in the ribosome. This is Elongation factor G from Francisella philomiragia subsp. philomiragia (strain ATCC 25017 / CCUG 19701 / FSC 153 / O#319-036).